The following is a 1099-amino-acid chain: Carbamoyl phosphate synthase large chain (1099 aa).

The interval 1-402 (MPRREDIKRI…ALGKALRSLE (402 aa)) is carboxyphosphate synthetic domain. Positions 129, 169, 175, 176, 208, 210, 215, 241, 242, 243, 285, and 299 each coordinate ATP. The ATP-grasp 1 domain maps to 133–328 (KKTMEEAGLE…IAKIAALLAV (196 aa)). Residues Gln-285, Glu-299, and Asn-301 each contribute to the Mg(2+) site. Positions 285, 299, and 301 each coordinate Mn(2+). The segment at 403–541 (LDAAPKLDLD…STYNGVENEA (139 aa)) is oligomerization domain. Residues 542-944 (IPTDKEKIMI…AFAKAEIAAG (403 aa)) form a carbamoyl phosphate synthetic domain region. Residues 666–857 (AKLLKRIGLR…VAKIAAKIMV (192 aa)) form the ATP-grasp 2 domain. Arg-702, Lys-741, Leu-743, Glu-748, Gly-773, Val-774, His-775, Ser-776, Gln-816, and Glu-828 together coordinate ATP. Mg(2+)-binding residues include Gln-816, Glu-828, and Asn-830. Mn(2+) is bound by residues Gln-816, Glu-828, and Asn-830. One can recognise an MGS-like domain in the interval 945-1099 (NPLPTEGAIL…VRKLTDTWKM (155 aa)). The segment at 945 to 1099 (NPLPTEGAIL…VRKLTDTWKM (155 aa)) is allosteric domain.

It belongs to the CarB family. As to quaternary structure, composed of two chains; the small (or glutamine) chain promotes the hydrolysis of glutamine to ammonia, which is used by the large (or ammonia) chain to synthesize carbamoyl phosphate. Tetramer of heterodimers (alpha,beta)4. Mg(2+) serves as cofactor. Mn(2+) is required as a cofactor.

It catalyses the reaction hydrogencarbonate + L-glutamine + 2 ATP + H2O = carbamoyl phosphate + L-glutamate + 2 ADP + phosphate + 2 H(+). The enzyme catalyses hydrogencarbonate + NH4(+) + 2 ATP = carbamoyl phosphate + 2 ADP + phosphate + 2 H(+). It participates in amino-acid biosynthesis; L-arginine biosynthesis; carbamoyl phosphate from bicarbonate: step 1/1. Its pathway is pyrimidine metabolism; UMP biosynthesis via de novo pathway; (S)-dihydroorotate from bicarbonate: step 1/3. In terms of biological role, large subunit of the glutamine-dependent carbamoyl phosphate synthetase (CPSase). CPSase catalyzes the formation of carbamoyl phosphate from the ammonia moiety of glutamine, carbonate, and phosphate donated by ATP, constituting the first step of 2 biosynthetic pathways, one leading to arginine and/or urea and the other to pyrimidine nucleotides. The large subunit (synthetase) binds the substrates ammonia (free or transferred from glutamine from the small subunit), hydrogencarbonate and ATP and carries out an ATP-coupled ligase reaction, activating hydrogencarbonate by forming carboxy phosphate which reacts with ammonia to form carbamoyl phosphate. The chain is Carbamoyl phosphate synthase large chain from Thermotoga neapolitana (strain ATCC 49049 / DSM 4359 / NBRC 107923 / NS-E).